The primary structure comprises 282 residues: Ammonia transport outward protein 2 (282 aa).

Residues 1–34 (MSDREQSSGNTAFENPKALDSSEGEFISENNDQS) form a disordered region. Residue serine 2 is modified to N-acetylserine. Serine 2, serine 7, serine 21, serine 22, serine 28, and serine 40 each carry phosphoserine. Topologically, residues 2–86 (SDREQSSGNT…GLAPAPVHKF (85 aa)) are extracellular. Residues 87-107 (ANPAPLGLSGFALTTFVLSMF) form a helical membrane-spanning segment. Residues 108–119 (NARAQGITIPNV) are Cytoplasmic-facing. A helical transmembrane segment spans residues 120-140 (VVGCAMFYGGLVQLIAGIWEI). Over 141-150 (ALENTFGGTA) the chain is Extracellular. The helical transmembrane segment at 151–171 (LCSFGGFWLSFGAIYIPWFGI) threads the bilayer. The Cytoplasmic segment spans residues 172 to 184 (LDAYKDKESDLGN). The helical transmembrane segment at 185–205 (ALGFYLLGWALFTFGLSVCTM) threads the bilayer. Residues 206–207 (KS) lie on the Extracellular side of the membrane. Residues 208–228 (TIMFFALFFLLAVTFLLLSIA) traverse the membrane as a helical segment. The Cytoplasmic portion of the chain corresponds to 229 to 238 (NFTGEVGVTR). The helical transmembrane segment at 239–259 (AGGVLGVIVAFIAWYNAYAGI) threads the bilayer. At 260 to 282 (ATRQNSYIMVHPFALPSNDKVFF) the chain is on the extracellular side.

It belongs to the acetate uptake transporter (AceTr) (TC 2.A.96) family.

The protein localises to the cell membrane. Its function is as follows. Transporter protein required for ammonia export. Involved in acetate resistance. This chain is Ammonia transport outward protein 2 (ATO2), found in Saccharomyces cerevisiae (strain ATCC 204508 / S288c) (Baker's yeast).